The sequence spans 93 residues: Putative defensin-like protein 282 (93 aa).

The signal sequence occupies residues 1–25 (MANATSFIALAYLLASALMTTVVLG). Intrachain disulfides connect Cys-51/Cys-83, Cys-66/Cys-90, and Cys-72/Cys-92.

Belongs to the DEFL family.

The protein resides in the secreted. In Arabidopsis thaliana (Mouse-ear cress), this protein is Putative defensin-like protein 282.